Consider the following 216-residue polypeptide: Protein Syd (216 aa).

It belongs to the Syd family.

It localises to the cell inner membrane. Interacts with the SecY protein in vivo. May bind preferentially to an uncomplexed state of SecY, thus functioning either as a chelating agent for excess SecY in the cell or as a regulatory factor that negatively controls the translocase function. This is Protein Syd from Shewanella putrefaciens (strain CN-32 / ATCC BAA-453).